The primary structure comprises 180 residues: UPF0340 protein llmg_0465 (180 aa).

The protein belongs to the UPF0340 family.

The chain is UPF0340 protein llmg_0465 from Lactococcus lactis subsp. cremoris (strain MG1363).